Here is a 320-residue protein sequence, read N- to C-terminus: tRNA U34 carboxymethyltransferase (320 aa).

Residues Lys-89, Trp-103, Lys-108, Gly-128, 150-152 (DPT), 179-180 (LE), Met-194, Tyr-198, and Arg-313 contribute to the carboxy-S-adenosyl-L-methionine site.

It belongs to the class I-like SAM-binding methyltransferase superfamily. CmoB family. Homotetramer.

The catalysed reaction is carboxy-S-adenosyl-L-methionine + 5-hydroxyuridine(34) in tRNA = 5-carboxymethoxyuridine(34) in tRNA + S-adenosyl-L-homocysteine + H(+). In terms of biological role, catalyzes carboxymethyl transfer from carboxy-S-adenosyl-L-methionine (Cx-SAM) to 5-hydroxyuridine (ho5U) to form 5-carboxymethoxyuridine (cmo5U) at position 34 in tRNAs. This is tRNA U34 carboxymethyltransferase from Haemophilus ducreyi (strain 35000HP / ATCC 700724).